The following is a 161-amino-acid chain: 6,7-dimethyl-8-ribityllumazine synthase (161 aa).

5-amino-6-(D-ribitylamino)uracil is bound by residues Trp-31, Thr-65–Glu-67, and Cys-89–Val-91. Asp-94–Thr-95 provides a ligand contact to (2S)-2-hydroxy-3-oxobutyl phosphate. His-97 acts as the Proton donor in catalysis. Phe-122 contacts 5-amino-6-(D-ribitylamino)uracil. Residue Arg-136 participates in (2S)-2-hydroxy-3-oxobutyl phosphate binding.

The protein belongs to the DMRL synthase family.

The enzyme catalyses (2S)-2-hydroxy-3-oxobutyl phosphate + 5-amino-6-(D-ribitylamino)uracil = 6,7-dimethyl-8-(1-D-ribityl)lumazine + phosphate + 2 H2O + H(+). It participates in cofactor biosynthesis; riboflavin biosynthesis; riboflavin from 2-hydroxy-3-oxobutyl phosphate and 5-amino-6-(D-ribitylamino)uracil: step 1/2. Its function is as follows. Catalyzes the formation of 6,7-dimethyl-8-ribityllumazine by condensation of 5-amino-6-(D-ribitylamino)uracil with 3,4-dihydroxy-2-butanone 4-phosphate. This is the penultimate step in the biosynthesis of riboflavin. The chain is 6,7-dimethyl-8-ribityllumazine synthase from Porphyromonas gingivalis (strain ATCC 33277 / DSM 20709 / CIP 103683 / JCM 12257 / NCTC 11834 / 2561).